The following is a 339-amino-acid chain: MRVYYDRDADVNLIKSKKVVIVGYGSQGRAHALNLKDSGAANVRVALREGSATVQKAQADGFEVMNVADAAKWADLMMMATPDELQADIYRDHIHNNLRDGAAIAFAHGLNVHFGLIEPKKTVDVVMIAPKGPGHTVRGEYQKGGGVPCLIAIHQDASGNAHDLALSYASGVGGGRSGVIETTFKEECETDLFGEQAVLCGGVVELIRTGFEVLVEAGYAPEMAYFECLNEMKLIVDLIYEGGIANMNYSISNTAEWGEYVTGPRIITAETKAEMKRVLKDIQTGKFTSDWMQEWKAGAARFKGIRRLNDAHQIEEVGGKLRAMMPWIEKNKLVDKARN.

The 182-residue stretch at 1-182 (MRVYYDRDAD…GGGRSGVIET (182 aa)) folds into the KARI N-terminal Rossmann domain. Residues 24-27 (YGSQ), R48, S51, T53, and 83-86 (DELQ) contribute to the NADP(+) site. The active site involves H108. G134 lines the NADP(+) pocket. Positions 183 to 328 (TFKEECETDL…GKLRAMMPWI (146 aa)) constitute a KARI C-terminal knotted domain. Positions 191, 195, 227, and 231 each coordinate Mg(2+). Residue S252 coordinates substrate.

The protein belongs to the ketol-acid reductoisomerase family. Requires Mg(2+) as cofactor.

The enzyme catalyses (2R)-2,3-dihydroxy-3-methylbutanoate + NADP(+) = (2S)-2-acetolactate + NADPH + H(+). It catalyses the reaction (2R,3R)-2,3-dihydroxy-3-methylpentanoate + NADP(+) = (S)-2-ethyl-2-hydroxy-3-oxobutanoate + NADPH + H(+). The protein operates within amino-acid biosynthesis; L-isoleucine biosynthesis; L-isoleucine from 2-oxobutanoate: step 2/4. It functions in the pathway amino-acid biosynthesis; L-valine biosynthesis; L-valine from pyruvate: step 2/4. Functionally, involved in the biosynthesis of branched-chain amino acids (BCAA). Catalyzes an alkyl-migration followed by a ketol-acid reduction of (S)-2-acetolactate (S2AL) to yield (R)-2,3-dihydroxy-isovalerate. In the isomerase reaction, S2AL is rearranged via a Mg-dependent methyl migration to produce 3-hydroxy-3-methyl-2-ketobutyrate (HMKB). In the reductase reaction, this 2-ketoacid undergoes a metal-dependent reduction by NADPH to yield (R)-2,3-dihydroxy-isovalerate. This is Ketol-acid reductoisomerase (NADP(+)) from Brucella canis (strain ATCC 23365 / NCTC 10854 / RM-666).